Here is a 553-residue protein sequence, read N- to C-terminus: Transmembrane protein DDB_G0292058 (553 aa).

The signal sequence occupies residues Met-1 to Ala-26. Transmembrane regions (helical) follow at residues Ile-80–Phe-100 and Val-137–Thr-157. Asn-162, Asn-171, Asn-178, and Asn-195 each carry an N-linked (GlcNAc...) asparagine glycan. Helical transmembrane passes span Ile-243–Leu-263 and Ser-274–Ile-294. Asn-315, Asn-332, Asn-351, Asn-396, Asn-405, and Asn-462 each carry an N-linked (GlcNAc...) asparagine glycan. The chain crosses the membrane as a helical span at residues Leu-515 to Ile-535.

The protein localises to the membrane. This is Transmembrane protein DDB_G0292058 from Dictyostelium discoideum (Social amoeba).